An 809-amino-acid chain; its full sequence is Origin of replication complex subunit 1A (809 aa).

The span at 1-47 shows a compositional bias: low complexity; sequence MASSLSSKAKTFKSPTKTPTKMYRKSYLSPSSTSLTPPQTPETLTPL. The interval 1–69 is disordered; the sequence is MASSLSSKAK…LGNDPIDLPG (69 aa). Residues 160–185 are histone H3 binding; that stretch reads DPEIEDCQICFKSHTNTIMIECDDCL. Residues 163–213 form a PHD-type zinc finger; sequence IEDCQICFKSHTNTIMIECDDCLGGFHLNCLKPPLKEVPEGDWICQFCEVK. Residues Cys166, Cys169, Cys181, Cys184, His189, and Cys192 each contribute to the Zn(2+) site. A histone H3 binding region spans residues 201-205; it reads PEGDW. Zn(2+) contacts are provided by Cys207 and Cys210. Residues 223-341 form the BAH domain; that stretch reads PKPPEGKKLA…VHWGSFKRVA (119 aa). Residues 316–321 form a histone H3 binding region; the sequence is ASNDGD. Residues 431–799 are necessary and sufficient for ORC complex assembly; sequence PKSLPCRSKE…DDVAFALKDN (369 aa). ATP is bound by residues 466–473 and 466–474; these read GVPGTGKT and GVPGTGKTI. Mg(2+) contacts are provided by Asp556 and Glu557. ATP is bound by residues Glu557, Asn590, and Arg655.

This sequence belongs to the ORC1 family. As to quaternary structure, component of the origin recognition complex (ORC) composed of at least ORC1 (ORC1A or ORC1B), ORC2, ORC3, ORC4, ORC5 and ORC6. ORC is regulated in a cell-cycle and development dependent manner. It is sequentially assembled at the exit from anaphase of mitosis and disassembled as cells enter S phase. Interacts directly with ORC2, ORC3, ORC4 and ORC5. Binds mostly unmodified histone H3, and, with lower efficiency, H3K4me1 H3K4me2 and H3K4me3. In terms of tissue distribution, follow a cell-cycle regulation with a peak at the G1/S-phase. Mostly expressed in siliques, flowers and flower buds, and, to a lower extent, in roots, leaves and stems.

It localises to the nucleus. Its function is as follows. Essential protein. Component of the origin recognition complex (ORC) that binds origins of replication. It has a role in both chromosomal replication and mating type transcriptional silencing. Binds to the ARS consensus sequence (ACS) of origins of replication. H3K4me3 effector that positively regulates the transcription of a subset of genes. This is Origin of replication complex subunit 1A from Arabidopsis thaliana (Mouse-ear cress).